We begin with the raw amino-acid sequence, 398 residues long: Lymphocyte transmembrane adapter 1 (398 aa).

The Extracellular portion of the chain corresponds to 1-37 (MDGVTPTLSTIRGRTLESSTLHVTPRSLDRNKDQITN). A helical; Signal-anchor for type III membrane protein membrane pass occupies residues 38 to 58 (IFSGFAGLLAILLVVAVFCIL). Residues 59 to 398 (WNWNKRKKRQ…GPGTQLLPDE (340 aa)) are Cytoplasmic-facing. Tyrosine 193 bears the Phosphotyrosine mark. A disordered region spans residues 228-261 (TEERDEGCGDAGDCTSLYSPGAEDSDSLSNGEGS). A phosphotyrosine mark is found at tyrosine 268 and tyrosine 294. Residues 298-330 (PAADPSGSQQQAEKDVPSSNIGHVEDKTDDPGT) are disordered. Over residues 303–318 (SGSQQQAEKDVPSSNI) the composition is skewed to polar residues. Residues 320-329 (HVEDKTDDPG) are compositionally biased toward basic and acidic residues. Residues tyrosine 345 and tyrosine 373 each carry the phosphotyrosine modification. The tract at residues 347–398 (DFQPFTQSEDSQMKHREEMSNEDSSDYENVLTAKLGGRDSEQGPGTQLLPDE) is disordered.

As to quaternary structure, when phosphorylated, interacts with GRB2, PIK3R1 and GRAP2. In terms of processing, phosphorylated on tyrosines by Syk, Lck or ZAP70 upon TCR or BCR activation; which leads to the recruitment of GRB2, PIK3R1 and GRAP2. Expressed in spleen, thymus, and peripheral blood leukocytes. Expressed in several B-, T-, NK and monocyte cell lines.

It is found in the cell membrane. Negatively regulates TCR (T-cell antigen receptor)-mediated signaling in T-cells and BCR (B-cell antigen receptor)-mediated signaling in B-cells. The protein is Lymphocyte transmembrane adapter 1 (LAX1) of Homo sapiens (Human).